We begin with the raw amino-acid sequence, 590 residues long: Aspartate--tRNA(Asp/Asn) ligase (590 aa).

Glu-172 contacts L-aspartate. The segment at 196 to 199 (QLFK) is aspartate. An L-aspartate-binding site is contributed by Arg-218. ATP-binding positions include 218 to 220 (RDE) and Gln-227. An L-aspartate-binding site is contributed by His-449. Residue Glu-484 participates in ATP binding. L-aspartate is bound at residue Arg-491. 536 to 539 (GVDR) contacts ATP.

The protein belongs to the class-II aminoacyl-tRNA synthetase family. Type 1 subfamily. In terms of assembly, homodimer.

The protein localises to the cytoplasm. It carries out the reaction tRNA(Asx) + L-aspartate + ATP = L-aspartyl-tRNA(Asx) + AMP + diphosphate. Its function is as follows. Aspartyl-tRNA synthetase with relaxed tRNA specificity since it is able to aspartylate not only its cognate tRNA(Asp) but also tRNA(Asn). Reaction proceeds in two steps: L-aspartate is first activated by ATP to form Asp-AMP and then transferred to the acceptor end of tRNA(Asp/Asn). This chain is Aspartate--tRNA(Asp/Asn) ligase, found in Francisella tularensis subsp. holarctica (strain FTNF002-00 / FTA).